The chain runs to 331 residues: Biotin synthase (331 aa).

In terms of domain architecture, Radical SAM core spans 53–272 (NHVETASLLS…LATARVMMPR (220 aa)). [4Fe-4S] cluster contacts are provided by Cys-68, Cys-72, and Cys-75. Residues Cys-112, Cys-143, Cys-203, and Arg-276 each coordinate [2Fe-2S] cluster.

It belongs to the radical SAM superfamily. Biotin synthase family. Homodimer. [4Fe-4S] cluster serves as cofactor. The cofactor is [2Fe-2S] cluster.

It carries out the reaction (4R,5S)-dethiobiotin + (sulfur carrier)-SH + 2 reduced [2Fe-2S]-[ferredoxin] + 2 S-adenosyl-L-methionine = (sulfur carrier)-H + biotin + 2 5'-deoxyadenosine + 2 L-methionine + 2 oxidized [2Fe-2S]-[ferredoxin]. It functions in the pathway cofactor biosynthesis; biotin biosynthesis; biotin from 7,8-diaminononanoate: step 2/2. In terms of biological role, catalyzes the conversion of dethiobiotin (DTB) to biotin by the insertion of a sulfur atom into dethiobiotin via a radical-based mechanism. The polypeptide is Biotin synthase (Bradyrhizobium diazoefficiens (strain JCM 10833 / BCRC 13528 / IAM 13628 / NBRC 14792 / USDA 110)).